Here is a 462-residue protein sequence, read N- to C-terminus: Glycine--tRNA ligase (462 aa).

The substrate site is built by Arg100 and Glu174. Residues 206–208, 216–221, 290–291, and 334–337 each bind ATP; these read RNE, FRTREF, EL, and GADR. 221-225 lines the substrate pocket; the sequence is FEQME. 330–334 is a binding site for substrate; the sequence is EPSLG.

Belongs to the class-II aminoacyl-tRNA synthetase family. In terms of assembly, homodimer.

The protein resides in the cytoplasm. It carries out the reaction tRNA(Gly) + glycine + ATP = glycyl-tRNA(Gly) + AMP + diphosphate. Catalyzes the attachment of glycine to tRNA(Gly). In Acetivibrio thermocellus (strain ATCC 27405 / DSM 1237 / JCM 9322 / NBRC 103400 / NCIMB 10682 / NRRL B-4536 / VPI 7372) (Clostridium thermocellum), this protein is Glycine--tRNA ligase.